The sequence spans 321 residues: Inner membrane protein YtfF (321 aa).

Residues 1-4 lie on the Cytoplasmic side of the membrane; the sequence is MISG. A helical transmembrane segment spans residues 5 to 25; it reads VLYALLAGLMWGLIFVGPLIV. The region spanning 13-141 is the EamA domain; it reads LMWGLIFVGP…IGIGLACVNI (129 aa). The Periplasmic segment spans residues 26 to 30; it reads PEYPA. A helical transmembrane segment spans residues 31–51; that stretch reads MLQSMGRYLALGLIALPIAWL. The Cytoplasmic portion of the chain corresponds to 52–65; that stretch reads GRVRLRQLARRDWL. The helical transmembrane segment at 66–86 threads the bilayer; the sequence is TALMLTMMGNLIYYFCLASAI. The Periplasmic segment spans residues 87–92; sequence QRTGAP. Residues 93-113 traverse the membrane as a helical segment; sequence VSTMIIGTLPVVIPVFANLLY. Residues 114-120 lie on the Cytoplasmic side of the membrane; that stretch reads SQRDGKL. Residues 121–141 form a helical membrane-spanning segment; sequence AWGKLAPALICIGIGLACVNI. Over 142 to 154 the chain is Periplasmic; the sequence is AELNHGLPDFDWA. A helical transmembrane segment spans residues 155-175; it reads RYTSGIVLALVSVVCWAWYAL. Over 176–194 the chain is Cytoplasmic; that stretch reads RNARWLRENPDKHPMMWAT. A helical membrane pass occupies residues 195-215; that stretch reads AQALVTLPVSLIGYLVACYWL. Residues 216–230 are Periplasmic-facing; sequence NTQTPDFSLPFGPRP. The helical transmembrane segment at 231 to 251 threads the bilayer; it reads LVFISLMVAIAVLCSWVGALC. The Cytoplasmic portion of the chain corresponds to 252–261; sequence WNVASQLLPT. The helical transmembrane segment at 262-282 threads the bilayer; the sequence is VILGPLIVFETLAGLLYTFLL. The Periplasmic portion of the chain corresponds to 283 to 285; that stretch reads RQQ. The helical transmembrane segment at 286 to 306 threads the bilayer; the sequence is MPPLMTLSGIALLVIGVVIAV. Residues 307 to 321 are Cytoplasmic-facing; it reads RAKPEKPLTESVSES.

The protein resides in the cell inner membrane. The polypeptide is Inner membrane protein YtfF (ytfF) (Escherichia coli (strain K12)).